The chain runs to 193 residues: Probable GTP-binding protein EngB (193 aa).

In terms of domain architecture, EngB-type G spans 22–193; sequence ALPEFALAGR…EAWAALERFL (172 aa). Residues 30-37, 57-61, 75-78, 142-145, and 174-176 contribute to the GTP site; these read GRSNVGKS, GKTQT, DVPG, TKAD, and FSA. Residues S37 and T59 each contribute to the Mg(2+) site.

This sequence belongs to the TRAFAC class TrmE-Era-EngA-EngB-Septin-like GTPase superfamily. EngB GTPase family. Requires Mg(2+) as cofactor.

Functionally, necessary for normal cell division and for the maintenance of normal septation. This is Probable GTP-binding protein EngB from Geobacillus sp. (strain WCH70).